The chain runs to 537 residues: Mitochondrial distribution and morphology protein 34 (537 aa).

The 195-residue stretch at 1-195 (MAFNFNWSPL…LPAIIHRLSL (195 aa)) folds into the SMP-LTD domain. Disordered regions lie at residues 320–339 (YTFS…RPSL), 348–403 (GLSL…IMPH), 421–493 (GRSP…DTSS), and 516–537 (KNGN…YEAR). Positions 355–371 (RHSKAGRKKKTRVVNLR) are enriched in basic residues. Residues 378–391 (ANSEEEEDTPETDS) show a composition bias toward acidic residues. Polar residues predominate over residues 425–441 (DLQQQPRRPSFRAQATN).

Belongs to the MDM34 family. In terms of assembly, component of the ER-mitochondria encounter structure (ERMES) or MDM complex, composed of MMM1, MDM10, MDM12 and MDM34.

Its subcellular location is the mitochondrion outer membrane. Component of the ERMES/MDM complex, which serves as a molecular tether to connect the endoplasmic reticulum (ER) and mitochondria. Components of this complex are involved in the control of mitochondrial shape and protein biogenesis, and function in nonvesicular lipid trafficking between the ER and mitochondria. MDM34 is required for the interaction of the ER-resident membrane protein MMM1 and the outer mitochondrial membrane-resident beta-barrel protein MDM10. In Chaetomium globosum (strain ATCC 6205 / CBS 148.51 / DSM 1962 / NBRC 6347 / NRRL 1970) (Soil fungus), this protein is Mitochondrial distribution and morphology protein 34.